The chain runs to 436 residues: 3-oxo-tetronate kinase (436 aa).

ATP is bound by residues S272, 372 to 375 (GGET), and G415.

This sequence belongs to the four-carbon acid sugar kinase family.

It carries out the reaction 3-dehydro-L-erythronate + ATP = 3-dehydro-4-O-phospho-L-erythronate + ADP + H(+). The enzyme catalyses 3-dehydro-D-erythronate + ATP = 3-dehydro-4-O-phospho-D-erythronate + ADP + H(+). Its function is as follows. Catalyzes the ATP-dependent phosphorylation of 3-oxo-tetronate to 3-oxo-tetronate 4-phosphate. In Brucella melitensis biotype 1 (strain ATCC 23456 / CCUG 17765 / NCTC 10094 / 16M), this protein is 3-oxo-tetronate kinase.